Reading from the N-terminus, the 424-residue chain is Enolase (424 aa).

Glutamine 162 provides a ligand contact to (2R)-2-phosphoglycerate. Catalysis depends on glutamate 204, which acts as the Proton donor. Residues aspartate 241, glutamate 284, and aspartate 311 each contribute to the Mg(2+) site. Residues lysine 336, arginine 365, serine 366, and lysine 387 each coordinate (2R)-2-phosphoglycerate. Lysine 336 (proton acceptor) is an active-site residue.

The protein belongs to the enolase family. Mg(2+) is required as a cofactor.

The protein resides in the cytoplasm. It localises to the secreted. It is found in the cell surface. It catalyses the reaction (2R)-2-phosphoglycerate = phosphoenolpyruvate + H2O. It functions in the pathway carbohydrate degradation; glycolysis; pyruvate from D-glyceraldehyde 3-phosphate: step 4/5. Its function is as follows. Catalyzes the reversible conversion of 2-phosphoglycerate (2-PG) into phosphoenolpyruvate (PEP). It is essential for the degradation of carbohydrates via glycolysis. In Maricaulis maris (strain MCS10) (Caulobacter maris), this protein is Enolase.